We begin with the raw amino-acid sequence, 592 residues long: Aspartate--tRNA(Asp/Asn) ligase (592 aa).

Glutamate 182 provides a ligand contact to L-aspartate. Residues 206 to 209 (QIFK) form an aspartate region. Residue arginine 228 participates in L-aspartate binding. Residues 228–230 (RDE) and glutamine 237 contribute to the ATP site. Residue histidine 455 coordinates L-aspartate. Glutamate 489 serves as a coordination point for ATP. L-aspartate is bound at residue arginine 496. Position 541-544 (541-544 (GLDR)) interacts with ATP.

Belongs to the class-II aminoacyl-tRNA synthetase family. Type 1 subfamily. In terms of assembly, homodimer.

It is found in the cytoplasm. It carries out the reaction tRNA(Asx) + L-aspartate + ATP = L-aspartyl-tRNA(Asx) + AMP + diphosphate. In terms of biological role, aspartyl-tRNA synthetase with relaxed tRNA specificity since it is able to aspartylate not only its cognate tRNA(Asp) but also tRNA(Asn). Reaction proceeds in two steps: L-aspartate is first activated by ATP to form Asp-AMP and then transferred to the acceptor end of tRNA(Asp/Asn). This chain is Aspartate--tRNA(Asp/Asn) ligase, found in Caldanaerobacter subterraneus subsp. tengcongensis (strain DSM 15242 / JCM 11007 / NBRC 100824 / MB4) (Thermoanaerobacter tengcongensis).